We begin with the raw amino-acid sequence, 185 residues long: Adenine phosphoribosyltransferase (185 aa).

The protein belongs to the purine/pyrimidine phosphoribosyltransferase family. Homodimer.

The protein localises to the cytoplasm. It catalyses the reaction AMP + diphosphate = 5-phospho-alpha-D-ribose 1-diphosphate + adenine. Its pathway is purine metabolism; AMP biosynthesis via salvage pathway; AMP from adenine: step 1/1. Catalyzes a salvage reaction resulting in the formation of AMP, that is energically less costly than de novo synthesis. In Arthrobacter sp. (strain FB24), this protein is Adenine phosphoribosyltransferase.